Reading from the N-terminus, the 162-residue chain is Glutathione peroxidase-like peroxiredoxin GPX5 (162 aa).

Cys38 carries the S-selanylcysteine modification. Asn87 is a catalytic residue.

This sequence belongs to the glutathione peroxidase family. Post-translationally, cys-87 is S-selanylated when selenium levels are high. S-selanylation may increase or be important for glutathione peroxidase activity.

The protein localises to the cytoplasm. The catalysed reaction is 2 glutathione + H2O2 = glutathione disulfide + 2 H2O. It carries out the reaction a hydroperoxide + [thioredoxin]-dithiol = an alcohol + [thioredoxin]-disulfide + H2O. Functionally, has thioredoxin peroxidase activity. May also have glutathione peroxidase activity, although this activity is controversial. Protects cells against reactive oxygen species, which may include photooxidative stress, hydrogen peroxide and organic hydroperoxides. In Chlamydomonas reinhardtii (Chlamydomonas smithii), this protein is Glutathione peroxidase-like peroxiredoxin GPX5.